Here is a 367-residue protein sequence, read N- to C-terminus: 3-isopropylmalate dehydrogenase (367 aa).

75-88 (GPKWDGIERSKRPE) serves as a coordination point for NAD(+). Arg95, Arg105, Arg133, and Asp230 together coordinate substrate. Mg(2+) contacts are provided by Asp230, Asp254, and Asp258. 288-300 (GSAPDIAGQDIAN) serves as a coordination point for NAD(+).

It belongs to the isocitrate and isopropylmalate dehydrogenases family. LeuB type 1 subfamily. Homodimer. Mg(2+) serves as cofactor. Requires Mn(2+) as cofactor.

The protein resides in the cytoplasm. The enzyme catalyses (2R,3S)-3-isopropylmalate + NAD(+) = 4-methyl-2-oxopentanoate + CO2 + NADH. Its pathway is amino-acid biosynthesis; L-leucine biosynthesis; L-leucine from 3-methyl-2-oxobutanoate: step 3/4. Functionally, catalyzes the oxidation of 3-carboxy-2-hydroxy-4-methylpentanoate (3-isopropylmalate) to 3-carboxy-4-methyl-2-oxopentanoate. The product decarboxylates to 4-methyl-2 oxopentanoate. The protein is 3-isopropylmalate dehydrogenase of Psychrobacter arcticus (strain DSM 17307 / VKM B-2377 / 273-4).